The sequence spans 461 residues: MNRTTSRQTTSSSSYKRMFGGEGRPSVGMARSTLSSRQYSSPVRSSRMSYSVSAPPSIYASKNVRLRSSAPMPRLSSDTVDFALSDAINSEFKANRTNEKAEMQHLNDRFASYIDKVRFLEQQNKILLAELEQLKGKGASRIGDLYEDEMRDLRRQVDQLTNEKAHVEVDRDNMGEDIERLREKLQDEMIQKEEAEHNLQSFRQDVDNASLARLDLERKVESLQEEIIFLRKLHDEEVAELQAQIQDQHVQIDMDVAKPDLTAALRDVRVQYETLASRNLQDSEDWYKSKFADLSEAANRNTDAIRQAKQEANEYRRQVQALTCEVDSLKGTNESMERQMRELEESFGCEANNFQDTISRLEDDIRNMKDEMARHLREYQDLLNVKMALDIEIATYRKLLEGEESRITTPMPNFSSFNLRESMLEARPMIDNLSKKVVIKTIETRDGHVINESTQNHDDLE.

Low complexity-rich tracts occupy residues 1 to 14 and 35 to 52; these read MNRT…SSSS and SSRQ…SYSV. A disordered region spans residues 1 to 52; sequence MNRTTSRQTTSSSSYKRMFGGEGRPSVGMARSTLSSRQYSSPVRSSRMSYSV. Positions 1-91 are head; the sequence is MNRTTSRQTT…FALSDAINSE (91 aa). The interval 92–127 is coil 1A; sequence FKANRTNEKAEMQHLNDRFASYIDKVRFLEQQNKIL. The stretch at 92-127 forms a coiled coil; it reads FKANRTNEKAEMQHLNDRFASYIDKVRFLEQQNKIL. Residues 99 to 407 form the IF rod domain; it reads EKAEMQHLND…KLLEGEESRI (309 aa). Positions 128–149 are linker 1; that stretch reads LAELEQLKGKGASRIGDLYEDE. A coiled-coil region spans residues 150 to 241; it reads MRDLRRQVDQ…KLHDEEVAEL (92 aa). The tract at residues 150–241 is coil 1B; that stretch reads MRDLRRQVDQ…KLHDEEVAEL (92 aa). The linker 12 stretch occupies residues 242–264; it reads QAQIQDQHVQIDMDVAKPDLTAA. Residues 265 to 403 are coil 2; the sequence is LRDVRVQYET…ATYRKLLEGE (139 aa). The stretch at 299 to 403 forms a coiled coil; sequence NRNTDAIRQA…ATYRKLLEGE (105 aa). Residues 404–461 form a tail region; that stretch reads ESRITTPMPNFSSFNLRESMLEARPMIDNLSKKVVIKTIETRDGHVINESTQNHDDLE.

This sequence belongs to the intermediate filament family. Homomer assembled from elementary dimers. Post-translationally, one of the most prominent phosphoproteins in various cells of mesenchymal origin. Phosphorylation is enhanced during cell division, at which time vimentin filaments are significantly reorganized.

It localises to the cytoplasm. Its subcellular location is the cytoskeleton. The protein localises to the nucleus matrix. In terms of biological role, vimentins are class-III intermediate filaments found in various non-epithelial cells, especially mesenchymal cells. Vimentin is attached to the nucleus, endoplasmic reticulum, and mitochondria, either laterally or terminally. The chain is Vimentin (vim) from Oncorhynchus mykiss (Rainbow trout).